Consider the following 130-residue polypeptide: Hydrogenase maturation factor HypA (130 aa).

A Ni(2+)-binding site is contributed by H2. C74, C77, C90, and C93 together coordinate Zn(2+).

The protein belongs to the HypA/HybF family.

Involved in the maturation of [NiFe] hydrogenases. Required for nickel insertion into the metal center of the hydrogenase. The chain is Hydrogenase maturation factor HypA from Desulfatibacillum aliphaticivorans.